The sequence spans 546 residues: MAAKEIIFHDGARAKLVEGVNLLANAVKVTLGPKGRNVVLERSFGSPVVTKDGVSVAKEIELADKVQNIGAQLVKEVASKTSDAAGDGTTTATVLAQAIVREGQKYVAAGLNPLDLKRGIDKAVAAAVDELKKISKPTTTSKEIAQVATISANGEESIGQRIAEAIDRVGKEGVITVEDGKSLADELDVVEGLQFDRGYLSPYFINHPERQLAVLDEPFILLHDKKISNIRDLLPVLEQVAKAGRPLLIVAEDVEGEALATLVVNNIRGILKTVAVKAPGFGDRRKALLEDIAILTGGQVITEETGLTLEKATLQELGRAKRIEVGKENTTLIDGAGDKPNIDARVKQIRAQIAEATSDYDREKLQERVAKLAGGVAVIKVGGATEVEVKEKKDRVDDALHATRAAVEEGIVPGGGVALIRVKQAIAALAGANADQKAGISIVLRALEEPLRQIVANAGEEASVVVATVAAGQGNYGYNAATGEYGDLVESGVLDPTKVTRTALQNAASIAGLLLTTDATVHEAPKDAPPAAPAGVPGAGGPGFDF.

ATP is bound by residues 30–33, Lys-51, 87–91, Gly-415, 479–481, and Asp-495; these read TLGP, DGTTT, and NAA. The interval 524–546 is disordered; it reads APKDAPPAAPAGVPGAGGPGFDF. Residues 537 to 546 show a composition bias toward gly residues; that stretch reads PGAGGPGFDF.

The protein belongs to the chaperonin (HSP60) family. In terms of assembly, forms a cylinder of 14 subunits composed of two heptameric rings stacked back-to-back. Interacts with the co-chaperonin GroES.

It localises to the cytoplasm. It carries out the reaction ATP + H2O + a folded polypeptide = ADP + phosphate + an unfolded polypeptide.. Functionally, together with its co-chaperonin GroES, plays an essential role in assisting protein folding. The GroEL-GroES system forms a nano-cage that allows encapsulation of the non-native substrate proteins and provides a physical environment optimized to promote and accelerate protein folding. This Burkholderia pseudomallei (strain 1710b) protein is Chaperonin GroEL 2.